We begin with the raw amino-acid sequence, 449 residues long: Probable phosphoglucosamine mutase (449 aa).

S96 functions as the Phosphoserine intermediate in the catalytic mechanism. S96, D233, D235, and D237 together coordinate Mg(2+). At S96 the chain carries Phosphoserine.

The protein belongs to the phosphohexose mutase family. Mg(2+) serves as cofactor. Post-translationally, activated by phosphorylation.

It carries out the reaction alpha-D-glucosamine 1-phosphate = D-glucosamine 6-phosphate. Functionally, catalyzes the conversion of glucosamine-6-phosphate to glucosamine-1-phosphate. In Thermococcus gammatolerans (strain DSM 15229 / JCM 11827 / EJ3), this protein is Probable phosphoglucosamine mutase.